The sequence spans 1134 residues: ATP-dependent helicase/deoxyribonuclease subunit B (1134 aa).

8 to 15 (GRAGSGKS) is an ATP binding site. Cysteine 771, cysteine 1089, cysteine 1092, and cysteine 1098 together coordinate [4Fe-4S] cluster.

It belongs to the helicase family. AddB/RexB type 1 subfamily. Heterodimer of AddA and AddB. Requires Mg(2+) as cofactor. [4Fe-4S] cluster is required as a cofactor.

Its function is as follows. The heterodimer acts as both an ATP-dependent DNA helicase and an ATP-dependent, dual-direction single-stranded exonuclease. Recognizes the chi site generating a DNA molecule suitable for the initiation of homologous recombination. The AddB subunit has 5' -&gt; 3' nuclease activity but not helicase activity. The protein is ATP-dependent helicase/deoxyribonuclease subunit B of Clostridium novyi (strain NT).